We begin with the raw amino-acid sequence, 95 residues long: Small ribosomal subunit protein bS18 (95 aa).

The protein belongs to the bacterial ribosomal protein bS18 family. In terms of assembly, part of the 30S ribosomal subunit. Forms a tight heterodimer with protein bS6.

In terms of biological role, binds as a heterodimer with protein bS6 to the central domain of the 16S rRNA, where it helps stabilize the platform of the 30S subunit. This is Small ribosomal subunit protein bS18 from Rickettsia peacockii (strain Rustic).